The chain runs to 463 residues: Exodeoxyribonuclease 7 large subunit (463 aa).

Belongs to the XseA family. In terms of assembly, heterooligomer composed of large and small subunits.

Its subcellular location is the cytoplasm. It carries out the reaction Exonucleolytic cleavage in either 5'- to 3'- or 3'- to 5'-direction to yield nucleoside 5'-phosphates.. Its function is as follows. Bidirectionally degrades single-stranded DNA into large acid-insoluble oligonucleotides, which are then degraded further into small acid-soluble oligonucleotides. This Bordetella pertussis (strain Tohama I / ATCC BAA-589 / NCTC 13251) protein is Exodeoxyribonuclease 7 large subunit.